A 170-amino-acid chain; its full sequence is uncharacterized protein (170 aa).

Residues 1–148 (MVKSQKVIDV…TIHDFFENAT (148 aa)) enclose the Ferritin-like diiron domain.

This is an uncharacterized protein from Ureaplasma parvum serovar 3 (strain ATCC 700970).